A 108-amino-acid polypeptide reads, in one-letter code: Ig kappa chain V-VI region NQ2-6.1 (108 aa).

Residues 1–23 (QILLTQSPAIMSASPGQKVTMTC) form a framework-1 region. Cys-23 and Cys-87 are oxidised to a cystine. Positions 24–33 (SASSSVSYMY) are complementarity-determining-1. Positions 34-48 (WYQQKPGSSPRLLIY) are framework-2. Residues 49-55 (DTSNLAS) form a complementarity-determining-2 region. Residues 56–87 (GVPVRFSGSGSATSYSLTITRMQAEDAATYYC) form a framework-3 region. The interval 88-98 (QQWSSYPPMLT) is complementarity-determining-3. Positions 99–108 (FGAGTKLELK) are framework-4.

The chain is Ig kappa chain V-VI region NQ2-6.1 from Mus musculus (Mouse).